A 393-amino-acid polypeptide reads, in one-letter code: S-adenosylmethionine synthase 2 (393 aa).

Residue E9 coordinates Mg(2+). H15 is a binding site for ATP. E43 is a K(+) binding site. L-methionine is bound by residues E56 and Q99. Residues D167–K169, S235–F238, D246, R252–M253, A269, K273, and K277 contribute to the ATP site. D246 is an L-methionine binding site. L-methionine is bound at residue K277.

The protein belongs to the AdoMet synthase family. In terms of assembly, homotetramer. It depends on Mn(2+) as a cofactor. Requires Mg(2+) as cofactor. The cofactor is Co(2+). K(+) is required as a cofactor.

Its subcellular location is the cytoplasm. It catalyses the reaction L-methionine + ATP + H2O = S-adenosyl-L-methionine + phosphate + diphosphate. Its pathway is amino-acid biosynthesis; S-adenosyl-L-methionine biosynthesis; S-adenosyl-L-methionine from L-methionine: step 1/1. In terms of biological role, catalyzes the formation of S-adenosylmethionine from methionine and ATP. The reaction comprises two steps that are both catalyzed by the same enzyme: formation of S-adenosylmethionine (AdoMet) and triphosphate, and subsequent hydrolysis of the triphosphate. This chain is S-adenosylmethionine synthase 2 (SAMS2), found in Daucus carota (Wild carrot).